A 674-amino-acid polypeptide reads, in one-letter code: MAVTLDSPSPARKRRPLVVGSFESPKLSSDTKLTRSLFLASHEISSMQPLPFILRRNSLSLIRKVKILASVFDELLLPRSQLVVYSQSAHLCFEEMQIVMQRIKSLIDDCSRVSKLWLLLQIDIVAFNFHELVTDLSTVLDILPLHDFDLSDDAQDLISLLTKQCSDSVQFVDARDVALRRKVTDTIAGIKHQISPDHSTLIKIFNDLGLSDSASLTDEIQRLEDEIQDQIDDRSKSAAASLIGLVRYSKCVLYGPSTPAPDFRRHQSLSDANIPADFRCPITLELMRDPVVVATGQTYDRESIDLWIQSGHNTCPKTGQVLKHTSLVPNRALKNLIVLWCRDQKIPFELYGDGGGEPAPCKEAVEFTKMMVSFLIEKLSVADSNGVVFELRALAKSDTVARACIAEAGAIPKLVRYLATECPSLQINAVTTILNLSILEQNKTRIMETDGALNGVIEVLRSGATWEAKANAAATLFSLAGVSAYRRRLGRKARVVSGLVDLAKQGPTSSKRDALVAILNLVAERENVGRFVEAGVMGAAGDAFQELPEEAVAVVEAVVRRGGLMAVSAAFSLIRLLGEVMREGADTTRESAAATLVTMCRKGGSELVAEMAAIPGIERVIWEMIGAGTARGGRKAASLMRYLRRWAAGDTHNTAAETQSIVVPTPSRIFSPVL.

Residues 273-347 enclose the U-box domain; the sequence is NIPADFRCPI…VLWCRDQKIP (75 aa). ARM repeat units lie at residues 399 to 438, 441 to 481, and 484 to 523; these read TVAR…NLSI, QNKT…SLAG, and AYRR…NLVA.

The catalysed reaction is S-ubiquitinyl-[E2 ubiquitin-conjugating enzyme]-L-cysteine + [acceptor protein]-L-lysine = [E2 ubiquitin-conjugating enzyme]-L-cysteine + N(6)-ubiquitinyl-[acceptor protein]-L-lysine.. It functions in the pathway protein modification; protein ubiquitination. In terms of biological role, functions as an E3 ubiquitin ligase. This chain is U-box domain-containing protein 16 (PUB16), found in Arabidopsis thaliana (Mouse-ear cress).